Here is a 96-residue protein sequence, read N- to C-terminus: Co-chaperonin GroES (96 aa).

Belongs to the GroES chaperonin family. As to quaternary structure, heptamer of 7 subunits arranged in a ring. Interacts with the chaperonin GroEL.

Its subcellular location is the cytoplasm. Functionally, together with the chaperonin GroEL, plays an essential role in assisting protein folding. The GroEL-GroES system forms a nano-cage that allows encapsulation of the non-native substrate proteins and provides a physical environment optimized to promote and accelerate protein folding. GroES binds to the apical surface of the GroEL ring, thereby capping the opening of the GroEL channel. This chain is Co-chaperonin GroES, found in Syntrophomonas wolfei subsp. wolfei (strain DSM 2245B / Goettingen).